A 226-amino-acid polypeptide reads, in one-letter code: Leucyl/phenylalanyl-tRNA--protein transferase (226 aa).

This sequence belongs to the L/F-transferase family.

It is found in the cytoplasm. The enzyme catalyses N-terminal L-lysyl-[protein] + L-leucyl-tRNA(Leu) = N-terminal L-leucyl-L-lysyl-[protein] + tRNA(Leu) + H(+). It carries out the reaction N-terminal L-arginyl-[protein] + L-leucyl-tRNA(Leu) = N-terminal L-leucyl-L-arginyl-[protein] + tRNA(Leu) + H(+). The catalysed reaction is L-phenylalanyl-tRNA(Phe) + an N-terminal L-alpha-aminoacyl-[protein] = an N-terminal L-phenylalanyl-L-alpha-aminoacyl-[protein] + tRNA(Phe). Functionally, functions in the N-end rule pathway of protein degradation where it conjugates Leu, Phe and, less efficiently, Met from aminoacyl-tRNAs to the N-termini of proteins containing an N-terminal arginine or lysine. This Pseudomonas putida (strain ATCC 47054 / DSM 6125 / CFBP 8728 / NCIMB 11950 / KT2440) protein is Leucyl/phenylalanyl-tRNA--protein transferase.